The primary structure comprises 390 residues: NADH-dependent butanol dehydrogenase B (390 aa).

This sequence belongs to the iron-containing alcohol dehydrogenase family. Homodimer.

It participates in alcohol metabolism; butanol biosynthesis. This chain is NADH-dependent butanol dehydrogenase B (bdhB), found in Clostridium acetobutylicum (strain ATCC 824 / DSM 792 / JCM 1419 / IAM 19013 / LMG 5710 / NBRC 13948 / NRRL B-527 / VKM B-1787 / 2291 / W).